The chain runs to 1047 residues: [F-actin]-monooxygenase MICAL1 (1047 aa).

A monooxygenase domain region spans residues 1-489; the sequence is MASPTSTNPA…QDLYDIMDKE (489 aa). Residues Cys95, 114–116, 121–123, Phe181, Tyr293, and Asp393 contribute to the FAD site; these read EKR and RHN. A Phosphothreonine modification is found at Thr475. The Calponin-homology (CH) domain maps to 507-611; it reads SAGTEELLHW…YLSHFHSAFK (105 aa). Ser616 carries the post-translational modification Phosphoserine. Residues 644 to 672 form a disordered region; sequence RTKVEEETPCTEEPPVSEPSVPPALPSEH. The segment covering 659-668 has biased composition (pro residues); the sequence is VSEPSVPPAL. The LIM zinc-binding domain maps to 679-741; sequence DVCELCGKRL…LQHLPQEDQK (63 aa). Zn(2+) is bound by residues Cys681, Cys684, His702, Cys705, Cys708, Cys711, Cys731, and His734. Disordered regions lie at residues 739 to 787 and 849 to 872; these read DQKE…QPAR and EKGE…PPPL. Over residues 745 to 767 the composition is skewed to polar residues; that stretch reads NNGSPENQELPTPGDSTTQSGPS. A phosphoserine mark is found at Ser777 and Ser781. Acidic residues predominate over residues 851-868; sequence GEEEEEEEEEEEEEEEEL. One can recognise a bMERB domain in the interval 905–1047; sequence KEEEMKRFCK…EERRLREMPV (143 aa). Residues 912 to 996 are a coiled coil; that stretch reads FCKAQAIQRR…LEEKQRQLDH (85 aa).

It belongs to the Mical family. Interacts with STK38 and STK38L. Associates with the SH3 domain of NEDD9. Interacts with VIM and PLXNA3. Interacts with RAB1B, RAB8A, RAB10, RAB13 and RAB15 (in their GTP-bound forms); binding to RAB1B is of low affinity compared to other Rab proteins; at least in case of RAB8A and RAB10 can bind 2 molecules of the Rab proteins simultaneously. Interacts with GRAF1/ARHGAP26, GRAF2/ARHGAP10, RAB8A, RAB8B and RAB10; may bind simultaneously to GRAFs and Rabs and connects GRAFs to Rabs. Does not interact with RAB1 and RAB11A. The cofactor is FAD.

It localises to the cytoplasm. Its subcellular location is the cytoskeleton. The protein localises to the endosome membrane. It is found in the midbody. The catalysed reaction is L-methionyl-[F-actin] + NADPH + O2 + H(+) = L-methionyl-(R)-S-oxide-[F-actin] + NADP(+) + H2O. It catalyses the reaction NADPH + O2 + H(+) = H2O2 + NADP(+). Monooxygenase that promotes depolymerization of F-actin by mediating oxidation of specific methionine residues on actin to form methionine-sulfoxide, resulting in actin filament disassembly and preventing repolymerization. In the absence of actin, it also functions as a NADPH oxidase producing H(2)O(2). Acts as a cytoskeletal regulator that connects NEDD9 to intermediate filaments. Also acts as a negative regulator of apoptosis via its interaction with STK38 and STK38L; acts by antagonizing STK38 and STK38L activation by MST1/STK4. Involved in regulation of lamina-specific connectivity in the nervous system such as the development of lamina-restricted hippocampal connections. Through redox regulation of the actin cytoskeleton controls the intracellular distribution of secretory vesicles containing L1/neurofascin/NgCAM family proteins in neurons, thereby regulating their cell surface levels. May act as Rab effector protein and play a role in vesicle trafficking. Promotes endosomal tubule extension by associating with RAB8 (RAB8A or RAB8B), RAB10 and GRAF (GRAF1/ARHGAP26 or GRAF2/ARHGAP10) on the endosomal membrane which may connect GRAFs to Rabs, thereby participating in neosynthesized Rab8-Rab10-Rab11-dependent protein export. In Rattus norvegicus (Rat), this protein is [F-actin]-monooxygenase MICAL1 (Mical1).